Reading from the N-terminus, the 505-residue chain is Lysine--tRNA ligase (505 aa).

Mg(2+) is bound by residues Glu415 and Glu422.

This sequence belongs to the class-II aminoacyl-tRNA synthetase family. In terms of assembly, homodimer. It depends on Mg(2+) as a cofactor.

The protein localises to the cytoplasm. The enzyme catalyses tRNA(Lys) + L-lysine + ATP = L-lysyl-tRNA(Lys) + AMP + diphosphate. The sequence is that of Lysine--tRNA ligase from Salmonella paratyphi C (strain RKS4594).